Consider the following 39-residue polypeptide: B melanoma antigen 4 (39 aa).

The N-terminal stretch at 1–17 (MAAGAVFLALSAQLLQA) is a signal peptide.

Belongs to the BAGE family. Not expressed in normal tissues except in testis. Expressed in melanoma, bladder and lung carcinomas.

It is found in the secreted. Functionally, unknown. Candidate gene encoding tumor antigens. In Homo sapiens (Human), this protein is B melanoma antigen 4 (BAGE4).